The following is a 542-amino-acid chain: TOM1-like protein 7 (542 aa).

Residues 29–158 (ATSELLRTPD…ELKRCGVKFP (130 aa)) form the VHS domain. Phosphoserine is present on Ser-161. One can recognise a GAT domain in the interval 201-289 (EIESLSLSSL…VLARHDAIAS (89 aa)). The disordered stretch occupies residues 303–340 (RETSSSLKTCGAAALESADSESSSSSSSSESETDEVED). Residues 314–332 (AAALESADSESSSSSSSSE) show a composition bias toward low complexity. At Ser-521 the chain carries Phosphoserine. Positions 522-542 (FPARATGTSGAATAATVDRQP) are disordered. Residues 524–542 (ARATGTSGAATAATVDRQP) are compositionally biased toward low complexity.

It belongs to the TOM1 family. Preferentially expressed in flowers.

The protein resides in the membrane. Functionally, might contribute to the loading of the ESCRT machinery. This is TOM1-like protein 7 from Arabidopsis thaliana (Mouse-ear cress).